A 226-amino-acid chain; its full sequence is NAD(P)H-hydrate epimerase (226 aa).

The YjeF N-terminal domain occupies 10–215; that stretch reads AIELDLDLFE…ALQRKYQLNL (206 aa). 58-62 provides a ligand contact to (6S)-NADPHX; sequence NNGGD. The K(+) site is built by Asn59 and Asp123. (6S)-NADPHX is bound by residues 127–133 and Asp156; that span reads GFGFKPP. Ser159 contacts K(+).

This sequence belongs to the NnrE/AIBP family. The cofactor is K(+).

It catalyses the reaction (6R)-NADHX = (6S)-NADHX. It carries out the reaction (6R)-NADPHX = (6S)-NADPHX. Functionally, catalyzes the epimerization of the S- and R-forms of NAD(P)HX, a damaged form of NAD(P)H that is a result of enzymatic or heat-dependent hydration. This is a prerequisite for the S-specific NAD(P)H-hydrate dehydratase to allow the repair of both epimers of NAD(P)HX. This is NAD(P)H-hydrate epimerase from Drosophila persimilis (Fruit fly).